The chain runs to 699 residues: Putative inactive kinesin-like protein KIN-7B (699 aa).

Residues 1-170 (MRAIQKKSLC…LLFGSCAKEV (170 aa)) form the Kinesin motor domain. Positions 179-247 (VMSDKALVKH…QSRLQDLLQS (69 aa)) form a coiled coil. The tract at residues 249–345 (GDHDLNRQVQ…VNSRHSRPSG (97 aa)) is disordered. Positions 264 to 275 (RSPPSVGMPPSV) are enriched in low complexity. Positions 276-298 (SRDDSSQVSHDDSDLYKEVRCIE) are enriched in basic and acidic residues. The segment covering 313-338 (GESSSPQDSNMNSGLHGNDSNASVNS) has biased composition (polar residues).

This sequence belongs to the TRAFAC class myosin-kinesin ATPase superfamily. Kinesin family. KIN-7 subfamily.

The polypeptide is Putative inactive kinesin-like protein KIN-7B (Oryza sativa subsp. japonica (Rice)).